Here is a 363-residue protein sequence, read N- to C-terminus: Protein TAX-1 (363 aa).

Residues 129–363 are required for localization to the flagellum and for flagellar motility; the sequence is RYGNAEEILS…IPFRGVAAEQ (235 aa). TPR repeat units lie at residues 157–190 and 199–232; these read AELH…LSVM and TFAY…WLKH.

As to quaternary structure, interacts with TTC29.

It is found in the cytoplasm. The protein resides in the cytoskeleton. The protein localises to the flagellum axoneme. Functionally, required for flagellum motility. The sequence is that of Protein TAX-1 from Trypanosoma brucei brucei (strain 927/4 GUTat10.1).